The chain runs to 504 residues: Pentatricopeptide repeat-containing protein At1g09220, mitochondrial (504 aa).

The transit peptide at 1–87 directs the protein to the mitochondrion; sequence MFLFSSRRIT…FLFNPLLRCY (87 aa). 10 PPR repeats span residues 76-110, 120-156, 157-187, 188-222, 223-253, 255-289, 291-321, 324-358, 359-390, and 396-430; these read KLFLFNPLLRCYSLGETPLHAYFLYDQLQRLHFLS, DSFTYLFLLKASSNPRFPSLLLGIGLHGLTLKLGFES, HVYVQTALVGMYLVGGNMIDAHKVFDEMPER, NPVTWNVMITGLTNLGDFEKALCFLEKMPNRTVVS, WTTIIDGYARVDKPKEAILLFSRMVACDAIK, NEITILAILPAVWNLGDLKMCGSVHAYVGKRGFVP, DIRVTNSLIDAYAKCGCIQSAFKFFIEIPNG, NLVSWTTMISAFAIHGMGKEAVSMFKDMERLGLKP, NRVTMISVLNACSHGGLAEEEFLEFFNTMVNE, and DVKHYGCLVDMLRRKGRLEEAEKIALEIPIEEKAV. The segment at 431–504 is type E motif; degenerate; sequence VWRMLLGACS…AKLPGHSQVT (74 aa).

It belongs to the PPR family. PCMP-E subfamily.

Its subcellular location is the mitochondrion. This is Pentatricopeptide repeat-containing protein At1g09220, mitochondrial (PCMP-E25) from Arabidopsis thaliana (Mouse-ear cress).